The chain runs to 217 residues: Pyrophosphatase PpaX (217 aa).

Aspartate 11 (nucleophile) is an active-site residue.

This sequence belongs to the HAD-like hydrolase superfamily. PpaX family. The cofactor is Mg(2+).

The enzyme catalyses diphosphate + H2O = 2 phosphate + H(+). In terms of biological role, hydrolyzes pyrophosphate formed during P-Ser-HPr dephosphorylation by HPrK/P. Might play a role in controlling the intracellular pyrophosphate pool. This Listeria monocytogenes serotype 4b (strain CLIP80459) protein is Pyrophosphatase PpaX.